A 362-amino-acid chain; its full sequence is Acetylglutamate kinase (362 aa).

The span at 1–11 shows a compositional bias: pro residues; that stretch reads MNAPTRTPPPS. A disordered region spans residues 1–42; the sequence is MNAPTRTPPPSNGGHGSTGSTGSTGDAAPGGGTGRGPAATAR. Substrate-binding positions include 106 to 107, Arg128, and Asn227; that span reads GG. A disordered region spans residues 329-362; sequence MAESGTSPEPGTPPAPAARPAGIVPAGEPTGGTP. Positions 346-355 are enriched in low complexity; the sequence is ARPAGIVPAG.

This sequence belongs to the acetylglutamate kinase family. ArgB subfamily.

It localises to the cytoplasm. It carries out the reaction N-acetyl-L-glutamate + ATP = N-acetyl-L-glutamyl 5-phosphate + ADP. Its pathway is amino-acid biosynthesis; L-arginine biosynthesis; N(2)-acetyl-L-ornithine from L-glutamate: step 2/4. Its function is as follows. Catalyzes the ATP-dependent phosphorylation of N-acetyl-L-glutamate. The sequence is that of Acetylglutamate kinase from Frankia casuarinae (strain DSM 45818 / CECT 9043 / HFP020203 / CcI3).